The primary structure comprises 103 residues: Cell division protein CrgA (103 aa).

The next 2 helical transmembrane spans lie at F49–L69 and I80–M100.

It belongs to the CrgA family.

Its subcellular location is the cell membrane. In terms of biological role, involved in cell division. This Bifidobacterium longum (strain NCC 2705) protein is Cell division protein CrgA.